A 120-amino-acid chain; its full sequence is Glycine cleavage system H protein (120 aa).

The Lipoyl-binding domain occupies 17–99 (IATVGITSHA…QGAGWFFKLK (83 aa)). N6-lipoyllysine is present on K58.

It belongs to the GcvH family. As to quaternary structure, the glycine cleavage system is composed of four proteins: P, T, L and H. (R)-lipoate serves as cofactor.

The glycine cleavage system catalyzes the degradation of glycine. The H protein shuttles the methylamine group of glycine from the P protein to the T protein. The sequence is that of Glycine cleavage system H protein from Agrobacterium fabrum (strain C58 / ATCC 33970) (Agrobacterium tumefaciens (strain C58)).